A 217-amino-acid polypeptide reads, in one-letter code: Ras-related protein Rab-19 (217 aa).

Ser26, Val28, Gly29, Lys30, Thr31, Cys32, Tyr42, Glu44, and Thr49 together coordinate GTP. Thr31 is a Mg(2+) binding site. A Switch 1 motif is present at residues Ser39–Phe54. Residues Thr49 and Asp72 each coordinate Mg(2+). The short motif at Ala74–Ser89 is the Switch 2 element. Gly75, Asn130, Lys131, Asp133, Ser161, Ala162, and Lys163 together coordinate GTP. S-geranylgeranyl cysteine attachment occurs at residues Cys215 and Cys217. The residue at position 217 (Cys217) is a Cysteine methyl ester.

The protein belongs to the small GTPase superfamily. Rab family. Requires Mg(2+) as cofactor.

Its subcellular location is the cell membrane. The enzyme catalyses GTP + H2O = GDP + phosphate + H(+). With respect to regulation, regulated by guanine nucleotide exchange factors (GEFs) which promote the exchange of bound GDP for free GTP. Regulated by GTPase activating proteins (GAPs) which increase the GTP hydrolysis activity. Inhibited by GDP dissociation inhibitors (GDIs). Functionally, the small GTPases Rab are key regulators of intracellular membrane trafficking, from the formation of transport vesicles to their fusion with membranes. Rabs cycle between an inactive GDP-bound form and an active GTP-bound form that is able to recruit to membranes different set of downstream effectors directly responsible for vesicle formation, movement, tethering and fusion. This chain is Ras-related protein Rab-19 (RAB19), found in Bos taurus (Bovine).